Here is a 162-residue protein sequence, read N- to C-terminus: Ribosome maturation factor RimP (162 aa).

Belongs to the RimP family.

It localises to the cytoplasm. Required for maturation of 30S ribosomal subunits. This chain is Ribosome maturation factor RimP, found in Leptospira biflexa serovar Patoc (strain Patoc 1 / Ames).